The primary structure comprises 120 residues: Ribosome-binding factor A (120 aa).

This sequence belongs to the RbfA family. As to quaternary structure, monomer. Binds 30S ribosomal subunits, but not 50S ribosomal subunits or 70S ribosomes.

Its subcellular location is the cytoplasm. In terms of biological role, one of several proteins that assist in the late maturation steps of the functional core of the 30S ribosomal subunit. Associates with free 30S ribosomal subunits (but not with 30S subunits that are part of 70S ribosomes or polysomes). Required for efficient processing of 16S rRNA. May interact with the 5'-terminal helix region of 16S rRNA. This is Ribosome-binding factor A from Chlamydia pneumoniae (Chlamydophila pneumoniae).